The following is a 423-amino-acid chain: MAEKIQAIRGMNDILPAESHQWEYFEGVLRGLLADYGYQNIRTPIVESTPLFIRSIGEVTDIVEKEMYTFTDSLNGDSLTLRPEGTAGTLRAVVEHNLLYNTTQKLWYTGPMFRHERPQKGRYRQFHQIGIEALGFAGPDIDAEIILMTADLWKRLGISDFVQLEINTLGNKEERAAHREALIKYLEGHVDILDEDGKRRLYTNPLRVLDTKNPAMQDMANQAPRLIDYLGAESRAHYDGWKAMIEAVGIRYVENPRLVRGLDYYNQSVFEWVTTELGAQGTVCAGGRYDGLTEQIGGKPAPGIGFGMGMERVLLLLADKDLLPARKAADVYIVQQGEGAPVYAMQLAQDLRAAGLSVIQHLGEASFKSQMKKADQSGARWALVVGENEIRQQQVAVKPLRDGTEQQTVARTDIVSHLAGRMA.

The protein belongs to the class-II aminoacyl-tRNA synthetase family. As to quaternary structure, homodimer.

It localises to the cytoplasm. The enzyme catalyses tRNA(His) + L-histidine + ATP = L-histidyl-tRNA(His) + AMP + diphosphate + H(+). The chain is Histidine--tRNA ligase from Laribacter hongkongensis (strain HLHK9).